Reading from the N-terminus, the 279-residue chain is tRNA pseudouridine synthase B (279 aa).

Asp-38 (nucleophile) is an active-site residue.

This sequence belongs to the pseudouridine synthase TruB family. Type 1 subfamily.

The catalysed reaction is uridine(55) in tRNA = pseudouridine(55) in tRNA. In terms of biological role, responsible for synthesis of pseudouridine from uracil-55 in the psi GC loop of transfer RNAs. The protein is tRNA pseudouridine synthase B of Acholeplasma laidlawii (strain PG-8A).